The primary structure comprises 126 residues: Small ribosomal subunit protein bS6 (126 aa).

Residues 104–126 (LARRDRGDRPERPREDFGAQAQA) are disordered. Residues 105–120 (ARRDRGDRPERPREDF) are compositionally biased toward basic and acidic residues.

This sequence belongs to the bacterial ribosomal protein bS6 family.

Binds together with bS18 to 16S ribosomal RNA. The sequence is that of Small ribosomal subunit protein bS6 from Caulobacter vibrioides (strain ATCC 19089 / CIP 103742 / CB 15) (Caulobacter crescentus).